Consider the following 107-residue polypeptide: Quaternary ammonium compound-resistance protein QacC (107 aa).

Helical transmembrane passes span 26 to 46, 57 to 77, and 84 to 104; these read FSKF…FYFL, ITYA…SIII, and LITI…NIFG.

Belongs to the drug/metabolite transporter (DMT) superfamily. Small multidrug resistance (SMR) (TC 2.A.7.1) family.

It localises to the cell membrane. Functionally, multidrug exporter. Is implicated for the resistance to bacteriocidal quaternary ammonium compounds. This is Quaternary ammonium compound-resistance protein QacC from Staphylococcus sp. (strain ST827).